The chain runs to 207 residues: 2,3-bisphosphoglycerate-dependent phosphoglycerate mutase (207 aa).

Substrate is bound by residues 10–17 (RHGQSEWN), 23–24 (TG), arginine 62, 89–92 (ERDY), lysine 100, 116–117 (RR), and 160–161 (GN). The active-site Tele-phosphohistidine intermediate is the histidine 11. Glutamate 89 (proton donor/acceptor) is an active-site residue.

This sequence belongs to the phosphoglycerate mutase family. BPG-dependent PGAM subfamily. In terms of assembly, homodimer.

The enzyme catalyses (2R)-2-phosphoglycerate = (2R)-3-phosphoglycerate. It functions in the pathway carbohydrate degradation; glycolysis; pyruvate from D-glyceraldehyde 3-phosphate: step 3/5. Catalyzes the interconversion of 2-phosphoglycerate and 3-phosphoglycerate. The chain is 2,3-bisphosphoglycerate-dependent phosphoglycerate mutase from Xanthobacter autotrophicus (strain ATCC BAA-1158 / Py2).